A 368-amino-acid polypeptide reads, in one-letter code: N-acetylneuraminate epimerase (368 aa).

Positions methionine 1–alanine 19 are cleaved as a signal peptide. 7 Kelch repeats span residues threonine 40–aspartate 84, asparagine 86–asparagine 137, lysine 139–alanine 173, histidine 174–glycine 219, threonine 222–glycine 265, glutamate 287–asparagine 336, and leucine 338–glutamine 367. The Proton acceptor role is filled by glutamate 228.

It belongs to the NanM family. In terms of assembly, homodimer.

It is found in the periplasm. The catalysed reaction is N-acetyl-alpha-neuraminate = N-acetyl-beta-neuraminate. Functionally, converts alpha-N-acetylneuranimic acid (Neu5Ac) to the beta-anomer, accelerating the equilibrium between the alpha- and beta-anomers. Probably facilitates sialidase-negative bacteria to compete successfully for limited amounts of extracellular Neu5Ac, which is likely taken up in the beta-anomer. In addition, the rapid removal of sialic acid from solution might be advantageous to the bacterium to damp down host responses. In Escherichia coli O1:K1 / APEC, this protein is N-acetylneuraminate epimerase.